Here is a 402-residue protein sequence, read N- to C-terminus: Multidrug resistance protein MdtH (402 aa).

Residues 1–12 are Cytoplasmic-facing; it reads MSRVSQARNLGK. A helical membrane pass occupies residues 13–33; the sequence is YFLLIDNMLVVLGFFVVFPLI. Residues 34–98 are Periplasmic-facing; the sequence is SIRFIDQMGW…GFATMGIAHE (65 aa). The chain crosses the membrane as a helical span at residues 99–116; that stretch reads PWLLWFSCFLSGLGGTLF. The Cytoplasmic portion of the chain corresponds to 117–138; sequence DPPRSALVVKLIRPEQRGRFFS. The helical transmembrane segment at 139-159 threads the bilayer; that stretch reads LLMMQDSAGAVIGALLGSWLL. Topologically, residues 160-164 are periplasmic; the sequence is QYDFR. A helical membrane pass occupies residues 165-185; that stretch reads LVCATGAILFILCALFNAWLL. The Cytoplasmic portion of the chain corresponds to 186-213; it reads PAWKLSTVRTPVREGMRRVMSDKRFVTY. Residues 214-234 traverse the membrane as a helical segment; that stretch reads VLTLAGYYMLAVQVMLMLPIM. The Periplasmic portion of the chain corresponds to 235–243; that stretch reads VNDIAGSPA. A helical transmembrane segment spans residues 244-264; that stretch reads AVKWMYAIEACLSLTLLYPIA. Over 265–276 the chain is Cytoplasmic; sequence RWSEKRFRLEHR. The helical transmembrane segment at 277–297 threads the bilayer; it reads LMAGLLVMSLSMIPIGMVGNL. At 298–299 the chain is on the periplasmic side; sequence QQ. A helical transmembrane segment spans residues 300–320; sequence LFTLICAFYIGSVIAEPARET. The Cytoplasmic portion of the chain corresponds to 321–339; that stretch reads LSASLADARARGSYMGFSR. The helical transmembrane segment at 340 to 360 threads the bilayer; the sequence is LGLAIGGAIGYIGGGWLFDMG. Residues 361-367 are Periplasmic-facing; that stretch reads KALTQPE. The chain crosses the membrane as a helical span at residues 368 to 388; sequence LPWMMLGIIGFITFLALGWQF. The Cytoplasmic portion of the chain corresponds to 389–402; sequence SHKRTPRRMLEPGA.

It belongs to the major facilitator superfamily. DHA1 family. MdtH (TC 2.A.1.2.21) subfamily.

The protein localises to the cell inner membrane. The protein is Multidrug resistance protein MdtH of Salmonella paratyphi C (strain RKS4594).